Here is a 114-residue protein sequence, read N- to C-terminus: UPF0102 protein Amet_2739 (114 aa).

The protein belongs to the UPF0102 family.

The protein is UPF0102 protein Amet_2739 of Alkaliphilus metalliredigens (strain QYMF).